We begin with the raw amino-acid sequence, 596 residues long: Merlin (596 aa).

Ser13 carries the phosphoserine modification. In terms of domain architecture, FERM spans Phe22 to Arg311. Ser518 carries the post-translational modification Phosphoserine; by PAK. The disordered stretch occupies residues Val560 to Lys580.

In terms of assembly, interacts with NHERF1, HGS and AGAP2. Interacts with SGSM3. Interacts (via FERM domain) with MPP1. Interacts with LAYN. Interacts with WWC1. Interacts with the CUL4A-RBX1-DDB1-VprBP/DCAF1 E3 ubiquitin-protein ligase complex. The unphosphorylated form interacts (via FERM domain) with VPRBP/DCAF1. Interacts (via FERM domain) with NOP53; the interaction is direct. Interacts with SCHIP1; the interaction is direct. Phosphorylation of Ser-518 inhibits nuclear localization by disrupting the intramolecular association of the FERM domain with the C-terminal tail. The dephosphorylation of Ser-518 favors the interaction with NOP53. In terms of processing, ubiquitinated by the CUL4A-RBX1-DDB1-DCAF1/VprBP E3 ubiquitin-protein ligase complex for ubiquitination and subsequent proteasome-dependent degradation.

The protein localises to the cell membrane. Its subcellular location is the cell projection. It is found in the cytoplasm. It localises to the cytoskeleton. The protein resides in the nucleus. In terms of biological role, probable regulator of the Hippo/SWH (Sav/Wts/Hpo) signaling pathway, a signaling pathway that plays a pivotal role in tumor suppression by restricting proliferation and promoting apoptosis. Along with WWC1 can synergistically induce the phosphorylation of LATS1 and LATS2 and can probably function in the regulation of the Hippo/SWH (Sav/Wts/Hpo) signaling pathway. May act as a membrane stabilizing protein. May inhibit PI3 kinase by binding to AGAP2 and impairing its stimulating activity. Suppresses cell proliferation and tumorigenesis by inhibiting the CUL4A-RBX1-DDB1-VprBP/DCAF1 E3 ubiquitin-protein ligase complex. Plays a role in lens development and is required for complete fiber cell terminal differentiation, maintenance of cell polarity and separation of the lens vesicle from the corneal epithelium. This chain is Merlin (Nf2), found in Mus musculus (Mouse).